The primary structure comprises 241 residues: Ion-translocating oxidoreductase complex subunit E (241 aa).

A run of 6 helical transmembrane segments spans residues 22–42, 69–89, 91–111, 124–144, 157–177, and 182–202; these read LLGL…IGLG, IPIY…VIKA, AFNL…NCIV, VLVS…TMFL, LFFG…IEVL, and VFLL…VLAG.

The protein belongs to the NqrDE/RnfAE family. As to quaternary structure, the complex is composed of six subunits: RnfA, RnfB, RnfC, RnfD, RnfE and RnfG.

The protein localises to the cell inner membrane. Its function is as follows. Part of a membrane-bound complex that couples electron transfer with translocation of ions across the membrane. This Buchnera aphidicola subsp. Baizongia pistaciae (strain Bp) protein is Ion-translocating oxidoreductase complex subunit E.